Reading from the N-terminus, the 217-residue chain is Homeobox protein Hox-B7 (217 aa).

Positions 126 to 131 match the Antp-type hexapeptide motif; it reads IYPWMR. The segment at residues 137–196 is a DNA-binding region (homeobox); it reads RKRGRQTYTRYQTLELEKEFHYNRYLTRRRRIEIAHTLCLTERQIKIWFQNRRMKWKKEN. The tract at residues 192 to 217 is disordered; sequence WKKENKTSGPGTTGQDKAEAEEEEEE.

The protein belongs to the Antp homeobox family. In terms of assembly, forms a DNA-binding heterodimer with transcription factor PBX1.

It localises to the nucleus. In terms of biological role, sequence-specific transcription factor which is part of a developmental regulatory system that provides cells with specific positional identities on the anterior-posterior axis. The chain is Homeobox protein Hox-B7 (Hoxb7) from Mus musculus (Mouse).